The sequence spans 185 residues: Ribosome-recycling factor (185 aa).

The protein belongs to the RRF family.

The protein localises to the cytoplasm. Functionally, responsible for the release of ribosomes from messenger RNA at the termination of protein biosynthesis. May increase the efficiency of translation by recycling ribosomes from one round of translation to another. The protein is Ribosome-recycling factor of Pseudoalteromonas atlantica (strain T6c / ATCC BAA-1087).